Reading from the N-terminus, the 156-residue chain is Large ribosomal subunit protein uL15 (156 aa).

The disordered stretch occupies residues 14-35 (GSRTHGWGRVGQHRKSGSSGGK).

The protein belongs to the universal ribosomal protein uL15 family. As to quaternary structure, part of the 50S ribosomal subunit.

Functionally, binds to the 23S rRNA. The sequence is that of Large ribosomal subunit protein uL15 from Pyrobaculum islandicum (strain DSM 4184 / JCM 9189 / GEO3).